Here is a 182-residue protein sequence, read N- to C-terminus: Probable RNA 2'-phosphotransferase (182 aa).

This sequence belongs to the KptA/TPT1 family.

Its function is as follows. Removes the 2'-phosphate from RNA via an intermediate in which the phosphate is ADP-ribosylated by NAD followed by a presumed transesterification to release the RNA and generate ADP-ribose 1''-2''-cyclic phosphate (APPR&gt;P). May function as an ADP-ribosylase. The polypeptide is Probable RNA 2'-phosphotransferase (Pseudomonas aeruginosa (strain UCBPP-PA14)).